A 138-amino-acid polypeptide reads, in one-letter code: Ostreolysin A6 (138 aa).

It belongs to the aegerolysin family. As to quaternary structure, monomer.

Has hemolytic activity against bovine erythrocytes at nanomolar concentrations in vitro. Promotes active pleurotolysin B (PlyB)-dependent permeabilization of membranes rich in cholesterol and sphingomyelin. May play an important role in the initial phase of fungal fruiting. The polypeptide is Ostreolysin A6 (OlyA6) (Pleurotus ostreatus (Oyster mushroom)).